Here is a 414-residue protein sequence, read N- to C-terminus: Putative transporter AmpG 4 (414 aa).

12 consecutive transmembrane segments (helical) span residues 15-35 (IFIL…TLSV), 44-63 (IAVI…KVFW), 84-104 (WLIL…KENP), 109-129 (TSLY…DIAV), 150-170 (VFGY…LAEI), 177-197 (LTFV…ITVN), 230-250 (FAVT…MLGA), 268-288 (IIAK…GGIV), 295-315 (FKGL…FIWL), 324-344 (ALLI…TALV), 360-379 (YALL…IYAG), and 389-409 (GFFI…MYLN).

It belongs to the major facilitator superfamily.

It localises to the cell inner membrane. The protein is Putative transporter AmpG 4 (ampG4) of Rickettsia felis (strain ATCC VR-1525 / URRWXCal2) (Rickettsia azadi).